Here is an 890-residue protein sequence, read N- to C-terminus: UPF0182 protein Ppro_2689 (890 aa).

7 helical membrane-spanning segments follow: residues 6-26, 50-70, 102-122, 157-177, 200-220, 244-264, and 266-286; these read FILILVIVALTVSLLSFLLAF, AGSGLLFAGVLFAGTLLNLLL, LGIPACAILALLVGQWGAMQW, TITAFAGFTLLTSLFLTVLVY, LAILLLLLSCVIAAGFHLDCF, TYRILTILAPLAGTALAIGLW, and GAWRMALLAPLAVIVLHVIGI.

The protein belongs to the UPF0182 family.

It localises to the cell membrane. This Pelobacter propionicus (strain DSM 2379 / NBRC 103807 / OttBd1) protein is UPF0182 protein Ppro_2689.